The primary structure comprises 365 residues: Histidinol-phosphate aminotransferase (365 aa).

The interval 1–22 (MSRPVPNPGILDIAPYTPGKSP) is disordered. Lys-221 carries the N6-(pyridoxal phosphate)lysine modification.

It belongs to the class-II pyridoxal-phosphate-dependent aminotransferase family. Histidinol-phosphate aminotransferase subfamily. Homodimer. Pyridoxal 5'-phosphate serves as cofactor.

It carries out the reaction L-histidinol phosphate + 2-oxoglutarate = 3-(imidazol-4-yl)-2-oxopropyl phosphate + L-glutamate. Its pathway is amino-acid biosynthesis; L-histidine biosynthesis; L-histidine from 5-phospho-alpha-D-ribose 1-diphosphate: step 7/9. The protein is Histidinol-phosphate aminotransferase of Nitrobacter winogradskyi (strain ATCC 25391 / DSM 10237 / CIP 104748 / NCIMB 11846 / Nb-255).